The sequence spans 458 residues: Histone acetyltransferase KAT8 (458 aa).

The segment covering 1–14 (MAAQGATAAVAATT) has biased composition (low complexity). A disordered region spans residues 1-52 (MAAQGATAAVAATTSGIVGEGEPGPGENTSVEGPARSPGRVSPPTPARGEPE). A2 carries the post-translational modification N-acetylalanine. S37 and S42 each carry phosphoserine. Residues 55 to 110 (VEIGETYLCRRPDSTWHSAEVIQSRVNDQEGREEFYVHYVGFNRRLDEWVDKNRLA) form the Tudor-knot domain. K113 carries the post-translational modification N6-acetyllysine. A Nuclear localization signal motif is present at residues 140–149 (RNQKRKHDEI). The region spanning 174–447 (TKVKYVDKIH…VDSVCLKWAP (274 aa)) is the MYST-type HAT domain. Residues 174-458 (TKVKYVDKIH…KHKQVKLSKK (285 aa)) are sufficient for interaction with KANSL1. A C2HC MYST-type zinc finger spans residues 207-232 (LWLCEYCLKYMKFEKSYRFHLGQCQW). Zn(2+) is bound by residues C210, C213, H226, and C230. N6-acetyllysine; by autocatalysis is present on K274. Acetyl-CoA-binding residues include I317, T319, R325, R326, G327, G329, and K330. S348 carries the post-translational modification Phosphoserine. Catalysis depends on E350, which acts as the Proton donor/acceptor. Acetyl-CoA is bound by residues S354, S363, Y408, and K432.

This sequence belongs to the MYST (SAS/MOZ) family. In terms of assembly, component of a multisubunit histone acetyltransferase complex (MSL) at least composed of the MOF/KAT8, MSL1/hampin, MSL2L1 and MSL3L1. Component of the NSL complex at least composed of MOF/KAT8, KANSL1, KANSL2, KANSL3, MCRS1, PHF20, OGT1/OGT, WDR5 and HCFC1. Component of some MLL1/MLL complex, at least composed of the core components KMT2A/MLL1, ASH2L, HCFC1, WDR5 and RBBP5, as well as the facultative components BACC1, CHD8, E2F6, HSP70, INO80C, KANSL1, LAS1L, MAX, MCRS1, MGA, MOF/KAT8, PELP1, PHF20, PRP31, RING2, RUVB1/TIP49A, RUVB2/TIP49B, SENP3, TAF1, TAF4, TAF6, TAF7, TAF9 and TEX10. Interacts with the chromodomain of MORF4L1/MRG15. Interacts with ATM (via its Tudor-knot domain); possibly regulating the activity of ATM. Interacts with NELFD. In terms of processing, acetylation at Lys-274 facilitates cognate substrate Lys-binding and acetylation. Although considered as an autoacetylation event, acetylation at Lys-274 probably takes place via a non-enzymatic process following acetyl-CoA-binding, which primes KAT8 for cognate protein-lysine acetylation. Deacetylated by SIRT1.

It is found in the nucleus. Its subcellular location is the chromosome. The protein localises to the mitochondrion. The catalysed reaction is L-lysyl-[histone] + acetyl-CoA = N(6)-acetyl-L-lysyl-[histone] + CoA + H(+). It catalyses the reaction L-lysyl-[protein] + acetyl-CoA = N(6)-acetyl-L-lysyl-[protein] + CoA + H(+). It carries out the reaction propanoyl-CoA + L-lysyl-[protein] = N(6)-propanoyl-L-lysyl-[protein] + CoA + H(+). Its activity is regulated as follows. The acetyltransferase activity is inhibited by anacardic acid derivatives. Functionally, histone acetyltransferase that catalyzes histone H4 acetylation at 'Lys-5'- and 'Lys-8' (H4K5ac and H4K8ac) or 'Lys-16' (H4K16ac), depending on the context. Catalytic component of the MSL histone acetyltransferase complex, a multiprotein complex that mediates the majority of histone H4 acetylation at 'Lys-16' (H4K16ac), an epigenetic mark that prevents chromatin compaction. H4K16ac constitutes the only acetylation mark intergenerationally transmitted and regulates key biological processes, such as oogenesis, embryonic stem cell pluripotency, hematopoiesis or glucose metabolism. The MSL complex is required for chromosome stability and genome integrity by maintaining homeostatic levels of H4K16ac. The MSL complex is also involved in gene dosage by promoting up-regulation of genes expressed by the X chromosome. X up-regulation is required to compensate for autosomal biallelic expression. The MSL complex also participates in gene dosage compensation by promoting expression of Tsix non-coding RNA. As part of the NSL histone acetyltransferase complex, catalyzes histone H4 acetylation at 'Lys-5'- and 'Lys-8' (H4K5ac and H4K8ac) at transcription start sites and promotes transcription initiation. The NSL complex also acts as a regulator of gene expression in mitochondria: KAT8 associates with mitochondrial DNA and controls expression of respiratory genes in an acetyltransferase-dependent mechanism. Also functions as an acetyltransferase for non-histone targets, such as ALKBH5, COX17, IRF3, KDM1A/LSD1, LMNA, PAX7 or TP53/p53. Acts as an inhibitor of antiviral immunity by acetylating IRF3, preventing IRF3 recruitment to promoters. Acts as a regulator of asymmetric division in muscle stem cells by mediating acetylation of PAX7. As part of the NSL complex, acetylates TP53/p53 at 'Lys-120'. Acts as a regulator of epithelial-to-mesenchymal transition as part of the NSL complex by mediating acetylation of KDM1A/LSD1. The NSL complex is required for nuclear architecture maintenance by mediating acetylation of LMNA. Promotes mitochondrial integrity by catalyzing acetylation of COX17. In addition to protein acetyltransferase activity, able to mediate protein propionylation. This is Histone acetyltransferase KAT8 (Kat8) from Rattus norvegicus (Rat).